Here is a 203-residue protein sequence, read N- to C-terminus: Small ribosomal subunit protein uS4c (203 aa).

The S4 RNA-binding domain maps to Met-92–Val-150.

Belongs to the universal ribosomal protein uS4 family. In terms of assembly, part of the 30S ribosomal subunit. Contacts protein S5. The interaction surface between S4 and S5 is involved in control of translational fidelity.

It is found in the plastid. Its subcellular location is the chloroplast. In terms of biological role, one of the primary rRNA binding proteins, it binds directly to 16S rRNA where it nucleates assembly of the body of the 30S subunit. With S5 and S12 plays an important role in translational accuracy. This is Small ribosomal subunit protein uS4c (rps4) from Chlorokybus atmophyticus (Soil alga).